We begin with the raw amino-acid sequence, 143 residues long: Nucleoside diphosphate kinase (143 aa).

Residues Lys-11, Phe-59, Arg-87, Thr-93, Arg-104, and Asn-114 each coordinate ATP. His-117 (pros-phosphohistidine intermediate) is an active-site residue.

This sequence belongs to the NDK family. As to quaternary structure, homotetramer. Requires Mg(2+) as cofactor.

Its subcellular location is the cytoplasm. The catalysed reaction is a 2'-deoxyribonucleoside 5'-diphosphate + ATP = a 2'-deoxyribonucleoside 5'-triphosphate + ADP. It carries out the reaction a ribonucleoside 5'-diphosphate + ATP = a ribonucleoside 5'-triphosphate + ADP. Functionally, major role in the synthesis of nucleoside triphosphates other than ATP. The ATP gamma phosphate is transferred to the NDP beta phosphate via a ping-pong mechanism, using a phosphorylated active-site intermediate. The chain is Nucleoside diphosphate kinase from Alteromonas mediterranea (strain DSM 17117 / CIP 110805 / LMG 28347 / Deep ecotype).